Consider the following 346-residue polypeptide: UPF0421 protein OB2406 (346 aa).

4 consecutive transmembrane segments (helical) span residues Ile-16–Val-36, Leu-55–Phe-75, Leu-102–Met-122, and Leu-128–Pro-148.

It belongs to the UPF0421 family.

The protein localises to the cell membrane. This is UPF0421 protein OB2406 from Oceanobacillus iheyensis (strain DSM 14371 / CIP 107618 / JCM 11309 / KCTC 3954 / HTE831).